Consider the following 134-residue polypeptide: Small ribosomal subunit protein uS9 (134 aa).

The segment at 109 to 134 is disordered; the sequence is DARRTEPHKPSKSSKGPRARRQKSYR. Residues 118-134 show a composition bias toward basic residues; the sequence is PSKSSKGPRARRQKSYR.

The protein belongs to the universal ribosomal protein uS9 family.

The polypeptide is Small ribosomal subunit protein uS9 (Methanococcus vannielii (strain ATCC 35089 / DSM 1224 / JCM 13029 / OCM 148 / SB)).